The chain runs to 63 residues: Jingdongin-1-MT1 (63 aa).

The signal sequence occupies residues 1–22 (MFTLKKSLLLLFFLGTINLSLC). The propeptide at 23–44 (EQERDADEEERRDDDEMDVEVE) is removed in mature form. An intrachain disulfide couples Cys-57 to Cys-63.

The protein belongs to the frog skin active peptide (FSAP) family. Brevinin subfamily. In terms of tissue distribution, expressed by the skin glands.

The protein resides in the secreted. Functionally, antimicrobial peptide. Active against some Gram-negative and a variety of Gram-positive bacterial strains. Active against fungus C.glabrata 090902 but not against C.neoformans 201211. Shows hemolytic activity against human erythrocytes. This Amolops mantzorum (Sichuan torrent frog) protein is Jingdongin-1-MT1.